The sequence spans 303 residues: Fe-S cluster assembly protein DRE2 (303 aa).

The tract at residues 1–125 (MTHSRTALVL…WQKRAVTASA (125 aa)) is N-terminal SAM-like domain. The linker stretch occupies residues 126–188 (PVKLAPRQPV…GDAPIAENDL (63 aa)). The [2Fe-2S] cluster site is built by Cys-202, Cys-213, Cys-216, and Cys-218. The fe-S binding site A stretch occupies residues 202-218 (CGRTQTRRRKACKDCTC). Positions 266, 269, 277, and 280 each coordinate [4Fe-4S] cluster. 2 consecutive short sequence motifs (cx2C motif) follow at residues 266–269 (CGSC) and 277–280 (CSGC). A fe-S binding site B region spans residues 266-280 (CGSCSLGDAFRCSGC).

It belongs to the anamorsin family. Monomer. Interacts with TAH18. Interacts with MIA40. [2Fe-2S] cluster is required as a cofactor. The cofactor is [4Fe-4S] cluster.

Its subcellular location is the cytoplasm. It is found in the mitochondrion intermembrane space. In terms of biological role, component of the cytosolic iron-sulfur (Fe-S) protein assembly (CIA) machinery required for the maturation of extramitochondrial Fe-S proteins. Part of an electron transfer chain functioning in an early step of cytosolic Fe-S biogenesis, facilitating the de novo assembly of a [4Fe-4S] cluster on the scaffold complex CFD1-NBP35. Electrons are transferred to DRE2 from NADPH via the FAD- and FMN-containing protein TAH18. TAH18-DRE2 are also required for the assembly of the diferric tyrosyl radical cofactor of ribonucleotide reductase (RNR), probably by providing electrons for reduction during radical cofactor maturation in the catalytic small subunit RNR2. The chain is Fe-S cluster assembly protein DRE2 from Eremothecium gossypii (strain ATCC 10895 / CBS 109.51 / FGSC 9923 / NRRL Y-1056) (Yeast).